We begin with the raw amino-acid sequence, 141 residues long: Arsenate reductase (141 aa).

Cys-12 serves as the catalytic Nucleophile; cysteine thioarsenate intermediate.

It belongs to the ArsC family.

It carries out the reaction [glutaredoxin]-dithiol + arsenate + glutathione + H(+) = glutathionyl-S-S-[glutaredoxin] + arsenite + H2O. In terms of biological role, involved in resistance to arsenate. Catalyzes the reduction of arsenate [As(V)] to arsenite [As(III)]. The sequence is that of Arsenate reductase from Escherichia coli (strain K12).